We begin with the raw amino-acid sequence, 283 residues long: Lectin subunit alpha (283 aa).

A signal peptide spans 1-23 (MSLTMKNVEGFVIFLVIFTSTAA). Residues 51–159 (HECARHDQQL…NVKMGYICEP (109 aa)) enclose the C-type lectin domain. 2 disulfide bridges follow: cysteine 53–cysteine 157 and cysteine 132–cysteine 149.

In terms of biological role, role in the defense system of the organism against microorganisms. This lectin binds galactose. This is Lectin subunit alpha from Sarcophaga peregrina (Flesh fly).